The chain runs to 405 residues: MNYSEIMIRYGELSTKGKNKMRFVNKLRNNIKHVLSVYPEVTVYFDRDRGHVYLNGADYQEVSASLKKIFGIQNFAPSYKIEKSVPALKEAVVEIMQTIYKEGMTFKIAARRSDHSFELDSRDLNQVLGDAVFTAIPNVQVQMKSPDITLRVEIRPDAAYISHEEIKGAGGLPVGTSGKGTLMLSGGIDSPVAGYLALKRGVEIEALHFASPPYTSPGALKKAHDLTRKLTAFGGNITFIEVPFTEIQEEIKEKAPEAYLMTLTRRFMMRITDRVREERGAMVIINGESLGQVASQTLESMQAINAVTNTPVIRPVVTMDKLEIIDIAQEIDTFDISIQPFEDCCTIFAPDRPKTNPKIKNVEQYEARMDVEGLVERAVAGIIVTEITPKEEVKDEVDSLIEDLL.

In terms of domain architecture, THUMP spans 60-165 (QEVSASLKKI…PDAAYISHEE (106 aa)). ATP-binding positions include 183 to 184 (ML), 208 to 209 (HF), Arg-265, Gly-287, and Gln-296.

The protein belongs to the ThiI family.

It is found in the cytoplasm. It carries out the reaction [ThiI sulfur-carrier protein]-S-sulfanyl-L-cysteine + a uridine in tRNA + 2 reduced [2Fe-2S]-[ferredoxin] + ATP + H(+) = [ThiI sulfur-carrier protein]-L-cysteine + a 4-thiouridine in tRNA + 2 oxidized [2Fe-2S]-[ferredoxin] + AMP + diphosphate. The catalysed reaction is [ThiS sulfur-carrier protein]-C-terminal Gly-Gly-AMP + S-sulfanyl-L-cysteinyl-[cysteine desulfurase] + AH2 = [ThiS sulfur-carrier protein]-C-terminal-Gly-aminoethanethioate + L-cysteinyl-[cysteine desulfurase] + A + AMP + 2 H(+). It participates in cofactor biosynthesis; thiamine diphosphate biosynthesis. Functionally, catalyzes the ATP-dependent transfer of a sulfur to tRNA to produce 4-thiouridine in position 8 of tRNAs, which functions as a near-UV photosensor. Also catalyzes the transfer of sulfur to the sulfur carrier protein ThiS, forming ThiS-thiocarboxylate. This is a step in the synthesis of thiazole, in the thiamine biosynthesis pathway. The sulfur is donated as persulfide by IscS. The sequence is that of Probable tRNA sulfurtransferase from Streptococcus suis (strain 98HAH33).